Consider the following 264-residue polypeptide: Undecaprenyl-diphosphatase (264 aa).

8 helical membrane passes run 1-21 (MDLIHVVVLALIQGITEFLPI), 39-59 (QGLAFDVAVHVGTLTAVAVYF), 87-107 (WYLIAATIPAALFGLIFDDLI), 111-131 (LRSTDVIATTTLVFGVLLWVA), 144-164 (IALSTAMIIGLAQAVALIPGT), 187-207 (FSFLLSIPVIVLSGGYKGLQL), 208-228 (VLSAAAVDWLAIGLGIALSAV), and 244-264 (IGMLPFVIYRLLLGVLLFIAV).

Belongs to the UppP family.

Its subcellular location is the cell inner membrane. The enzyme catalyses di-trans,octa-cis-undecaprenyl diphosphate + H2O = di-trans,octa-cis-undecaprenyl phosphate + phosphate + H(+). Functionally, catalyzes the dephosphorylation of undecaprenyl diphosphate (UPP). Confers resistance to bacitracin. This Teredinibacter turnerae (strain ATCC 39867 / T7901) protein is Undecaprenyl-diphosphatase.